The following is a 495-amino-acid chain: Aspartyl/glutamyl-tRNA(Asn/Gln) amidotransferase subunit B (495 aa).

This sequence belongs to the GatB/GatE family. GatB subfamily. As to quaternary structure, heterotrimer of A, B and C subunits.

It carries out the reaction L-glutamyl-tRNA(Gln) + L-glutamine + ATP + H2O = L-glutaminyl-tRNA(Gln) + L-glutamate + ADP + phosphate + H(+). The catalysed reaction is L-aspartyl-tRNA(Asn) + L-glutamine + ATP + H2O = L-asparaginyl-tRNA(Asn) + L-glutamate + ADP + phosphate + 2 H(+). Functionally, allows the formation of correctly charged Asn-tRNA(Asn) or Gln-tRNA(Gln) through the transamidation of misacylated Asp-tRNA(Asn) or Glu-tRNA(Gln) in organisms which lack either or both of asparaginyl-tRNA or glutaminyl-tRNA synthetases. The reaction takes place in the presence of glutamine and ATP through an activated phospho-Asp-tRNA(Asn) or phospho-Glu-tRNA(Gln). In Methanosarcina acetivorans (strain ATCC 35395 / DSM 2834 / JCM 12185 / C2A), this protein is Aspartyl/glutamyl-tRNA(Asn/Gln) amidotransferase subunit B.